The following is a 288-amino-acid chain: Pantothenate synthetase (288 aa).

31 to 38 (MGNLHRGH) is a binding site for ATP. His38 (proton donor) is an active-site residue. Residue Gln62 participates in (R)-pantoate binding. Gln62 is a beta-alanine binding site. Position 150–153 (150–153 (GQKD)) interacts with ATP. Gln156 provides a ligand contact to (R)-pantoate. Residues Ile179 and 187–190 (LSSR) contribute to the ATP site.

The protein belongs to the pantothenate synthetase family. Homodimer.

Its subcellular location is the cytoplasm. It catalyses the reaction (R)-pantoate + beta-alanine + ATP = (R)-pantothenate + AMP + diphosphate + H(+). The protein operates within cofactor biosynthesis; (R)-pantothenate biosynthesis; (R)-pantothenate from (R)-pantoate and beta-alanine: step 1/1. Its function is as follows. Catalyzes the condensation of pantoate with beta-alanine in an ATP-dependent reaction via a pantoyl-adenylate intermediate. The sequence is that of Pantothenate synthetase from Wigglesworthia glossinidia brevipalpis.